A 214-amino-acid polypeptide reads, in one-letter code: Probable nicotinate-nucleotide adenylyltransferase (214 aa).

This sequence belongs to the NadD family.

The catalysed reaction is nicotinate beta-D-ribonucleotide + ATP + H(+) = deamido-NAD(+) + diphosphate. It participates in cofactor biosynthesis; NAD(+) biosynthesis; deamido-NAD(+) from nicotinate D-ribonucleotide: step 1/1. In terms of biological role, catalyzes the reversible adenylation of nicotinate mononucleotide (NaMN) to nicotinic acid adenine dinucleotide (NaAD). The sequence is that of Probable nicotinate-nucleotide adenylyltransferase from Mycolicibacterium vanbaalenii (strain DSM 7251 / JCM 13017 / BCRC 16820 / KCTC 9966 / NRRL B-24157 / PYR-1) (Mycobacterium vanbaalenii).